The sequence spans 316 residues: Aspartate carbamoyltransferase catalytic subunit (316 aa).

Residues Arg-66 and Thr-67 each coordinate carbamoyl phosphate. Residue Lys-94 participates in L-aspartate binding. Carbamoyl phosphate-binding residues include Arg-116, His-146, and Gln-149. Residues Arg-180 and Arg-235 each contribute to the L-aspartate site. 2 residues coordinate carbamoyl phosphate: Gly-276 and Pro-277.

This sequence belongs to the aspartate/ornithine carbamoyltransferase superfamily. ATCase family. In terms of assembly, heterododecamer (2C3:3R2) of six catalytic PyrB chains organized as two trimers (C3), and six regulatory PyrI chains organized as three dimers (R2).

The catalysed reaction is carbamoyl phosphate + L-aspartate = N-carbamoyl-L-aspartate + phosphate + H(+). It functions in the pathway pyrimidine metabolism; UMP biosynthesis via de novo pathway; (S)-dihydroorotate from bicarbonate: step 2/3. Functionally, catalyzes the condensation of carbamoyl phosphate and aspartate to form carbamoyl aspartate and inorganic phosphate, the committed step in the de novo pyrimidine nucleotide biosynthesis pathway. The chain is Aspartate carbamoyltransferase catalytic subunit from Stenotrophomonas maltophilia (strain R551-3).